The sequence spans 305 residues: UDP-3-O-acyl-N-acetylglucosamine deacetylase (305 aa).

Residues H78, H237, and D241 each contribute to the Zn(2+) site. H264 acts as the Proton donor in catalysis.

This sequence belongs to the LpxC family. The cofactor is Zn(2+).

The catalysed reaction is a UDP-3-O-[(3R)-3-hydroxyacyl]-N-acetyl-alpha-D-glucosamine + H2O = a UDP-3-O-[(3R)-3-hydroxyacyl]-alpha-D-glucosamine + acetate. Its pathway is glycolipid biosynthesis; lipid IV(A) biosynthesis; lipid IV(A) from (3R)-3-hydroxytetradecanoyl-[acyl-carrier-protein] and UDP-N-acetyl-alpha-D-glucosamine: step 2/6. In terms of biological role, catalyzes the hydrolysis of UDP-3-O-myristoyl-N-acetylglucosamine to form UDP-3-O-myristoylglucosamine and acetate, the committed step in lipid A biosynthesis. This Burkholderia cenocepacia (strain ATCC BAA-245 / DSM 16553 / LMG 16656 / NCTC 13227 / J2315 / CF5610) (Burkholderia cepacia (strain J2315)) protein is UDP-3-O-acyl-N-acetylglucosamine deacetylase.